The following is a 355-amino-acid chain: Isopentenyl-diphosphate delta-isomerase (355 aa).

Residue 12–13 (RK) coordinates substrate. FMN is bound by residues serine 70, 71-73 (SMT), serine 101, and asparagine 130. A substrate-binding site is contributed by 101 to 103 (SMR). Glutamine 165 provides a ligand contact to substrate. Glutamate 166 is a Mg(2+) binding site. FMN-binding positions include lysine 197 and 308-309 (AG).

This sequence belongs to the IPP isomerase type 2 family. Homooctamer. Dimer of tetramers. It depends on FMN as a cofactor. NADPH serves as cofactor. The cofactor is Mg(2+).

It localises to the cytoplasm. The catalysed reaction is isopentenyl diphosphate = dimethylallyl diphosphate. Functionally, involved in the biosynthesis of isoprenoids. Catalyzes the 1,3-allylic rearrangement of the homoallylic substrate isopentenyl (IPP) to its allylic isomer, dimethylallyl diphosphate (DMAPP). This is Isopentenyl-diphosphate delta-isomerase from Chlorobium phaeovibrioides (strain DSM 265 / 1930) (Prosthecochloris vibrioformis (strain DSM 265)).